We begin with the raw amino-acid sequence, 324 residues long: ATP synthase mitochondrial F1 complex assembly factor 1 (324 aa).

A mitochondrion-targeting transit peptide spans methionine 1–leucine 54.

Belongs to the ATP11 family. In terms of assembly, interacts with ATP5F1B; involved in the assembly of the F1 component of the mitochondrial ATP synthase (ATPase). In terms of tissue distribution, widely expressed but with low level.

The protein localises to the mitochondrion inner membrane. In terms of biological role, has a complex stabilizing activity in the assembly of the mitochondrial F1-F0 complex. This chain is ATP synthase mitochondrial F1 complex assembly factor 1, found in Mus musculus (Mouse).